The chain runs to 277 residues: Carbonyl reductase [NADPH] 1 (277 aa).

S2 bears the N-acetylserine mark. Residues S2 and S30 each carry the phosphoserine modification. NADP(+)-binding positions include 10–34 (VTGG…GDVV), 63–64 (DI), and N90. Residues 95–97 (FKV) and Q106 each bind glutathione. Residue S140 coordinates substrate. 193-194 (AY) provides a ligand contact to glutathione. Y194 (proton acceptor) is an active-site residue. NADP(+)-binding positions include 194 to 198 (YGVTK) and 231 to 233 (VRT). K239 is modified (N6-1-carboxyethyl lysine).

Belongs to the short-chain dehydrogenases/reductases (SDR) family. Monomer. As to expression, expressed in kidney (at protein level).

It localises to the cytoplasm. It carries out the reaction a secondary alcohol + NADP(+) = a ketone + NADPH + H(+). The enzyme catalyses a primary alcohol + NADP(+) = an aldehyde + NADPH + H(+). It catalyses the reaction prostaglandin F2alpha + NADP(+) = prostaglandin E2 + NADPH + H(+). The catalysed reaction is prostaglandin E1 + NADP(+) = 15-oxoprostaglandin E1 + NADPH + H(+). It carries out the reaction menadione + NADPH + H(+) = menadiol + NADP(+). The enzyme catalyses prostaglandin D2 + NADP(+) = 15-oxoprostaglandin D2 + NADPH + H(+). It catalyses the reaction prostaglandin E2 + NADP(+) = 15-oxoprostaglandin E2 + NADPH + H(+). The catalysed reaction is prostaglandin F2alpha + NADP(+) = 15-oxoprostaglandin F2alpha + NADPH + H(+). It carries out the reaction daunorubicin + NADPH + H(+) = 13-dihydrodaunorubicin + NADP(+). The enzyme catalyses S-nitrosoglutathione + NADPH + H(+) = S-(hydroxysulfenamide)glutathione + NADP(+). It catalyses the reaction cortisol + NADPH + H(+) = 20beta-dihydrocortisol + NADP(+). The catalysed reaction is corticosterone + NADPH + H(+) = 20beta-dihydrocorticosterone + NADP(+). Its activity is regulated as follows. Inhibited by quercetin, rutenin and its derivatives. Functionally, NADPH-dependent reductase with broad substrate specificity. Catalyzes the reduction of a wide variety of carbonyl compounds including quinones, prostaglandins, menadione, plus various xenobiotics. Catalyzes the reduction of the antitumor anthracyclines doxorubicin and daunorubicin to the cardiotoxic compounds doxorubicinol and daunorubicinol. Can convert prostaglandin E to prostaglandin F2-alpha. Can bind glutathione, which explains its higher affinity for glutathione-conjugated substrates. Catalyzes the reduction of S-nitrosoglutathione. In addition, participates in the glucocorticoid metabolism by catalyzing the NADPH-dependent cortisol/corticosterone into 20beta-dihydrocortisol (20b-DHF) or 20beta-corticosterone (20b-DHB), which are weak agonists of NR3C1 and NR3C2 in adipose tissue. This is Carbonyl reductase [NADPH] 1 from Homo sapiens (Human).